Reading from the N-terminus, the 268-residue chain is Glucosamine-6-phosphate deaminase (268 aa).

The Proton acceptor; for enolization step role is filled by D67. N136 serves as the catalytic For ring-opening step. H138 functions as the Proton acceptor; for ring-opening step in the catalytic mechanism. The active-site For ring-opening step is E143.

This sequence belongs to the glucosamine/galactosamine-6-phosphate isomerase family. NagB subfamily. As to quaternary structure, homohexamer.

The catalysed reaction is alpha-D-glucosamine 6-phosphate + H2O = beta-D-fructose 6-phosphate + NH4(+). It functions in the pathway amino-sugar metabolism; N-acetylneuraminate degradation; D-fructose 6-phosphate from N-acetylneuraminate: step 5/5. Catalyzes the reversible isomerization-deamination of glucosamine 6-phosphate (GlcN6P) to form fructose 6-phosphate (Fru6P) and ammonium ion. This chain is Glucosamine-6-phosphate deaminase, found in Shewanella loihica (strain ATCC BAA-1088 / PV-4).